A 797-amino-acid chain; its full sequence is MELLRSNLSRVQIPEPTHRIYKHECCISFDTPRSEGGLFVDMNSFLAFGKDYVSWNYEKTGNPVYLHIKQTRKSIPEDRPLKKPTLLAIGVDGGFDNNEPEYEESYSIVILPDFVSLPFPSVELPEKVRIAVDTVVNAVGAERKEQVAAWTAEKKLISEHALTLQQIKSGIVIPPSGWKCSKCDKTENLWLNLTDGMILCGRKNWDGTGGNNHAVEHYKETAYPLAVKLGTITADLEAADVYSYPEDDSVLDPLLAEHLAHFGIDFSSMQKTEMTTAERELDQNTNFDWNRIQESGKELVPVFGPGYTGLVNLGNSCYLAATMQIVFSTHSFISRYFSHQSLKMAFEMAPADPTLDLNMQLTKLGHGLLSGKYSMPATQKDATTGDPRQEGIPPRMFKNVIAASHAEFSSMRQQDALDFFLHLVGKVERASNTTPDLDPSRSFKFGIEEKILCPSGKVGYNKREDCILSLNIPLHEATNKDELEAFHKQKAGKGLEENDMRSSDEIVRPRVPLEACLANFASSEPIEDYYSSALKGMTTAIKTTGLTSFPDYLVLHMRKFVMEEGWVPKKLDVYIDVPDVIDISHMRSKGLQPGEELLPDGVPEEVMESAQPVANEEIVAQLVSMGFSQLHCQKAAINTSNAGVEEAMNWLLSHMDDPDIDAPISHQTSDIDQSSVDTLLSFGFAEDVARKALKASGGDIEKATDWVFNNPNASVSDMDVSSSNSAQTPAQSGLPDGGGKYKLFGIVSHMGTSVHCGHYVAHILKEGRWVIFNDDKVGISTDPPKDMGYVYFFQRLD.

A UBP-type; degenerate zinc finger spans residues 156–266; sequence LISEHALTLQ…EHLAHFGIDF (111 aa). Residues Cys-180, Cys-183, Cys-200, and His-213 each coordinate Zn(2+). Residues 308 to 796 form the USP domain; sequence TGLVNLGNSC…MGYVYFFQRL (489 aa). Residue Cys-317 is the Nucleophile of the active site. 2 UBA domains span residues 613 to 654 and 670 to 710; these read VANE…LLSH and DIDQ…VFNN. The Proton acceptor role is filled by His-758.

The protein belongs to the peptidase C19 family. As to expression, constitutively and ubiquitously expressed (at protein level).

The enzyme catalyses Thiol-dependent hydrolysis of ester, thioester, amide, peptide and isopeptide bonds formed by the C-terminal Gly of ubiquitin (a 76-residue protein attached to proteins as an intracellular targeting signal).. In terms of biological role, recognizes and hydrolyzes the peptide bond at the C-terminal Gly of ubiquitin. Involved in the processing of poly-ubiquitin precursors as well as that of ubiquitinated proteins. Involved in seed and embryo development. In Arabidopsis thaliana (Mouse-ear cress), this protein is Ubiquitin carboxyl-terminal hydrolase 14 (UBP14).